The sequence spans 280 residues: MSHADLEKTIEAAWEERAGISTATTGAVREAVDEALNLLDSGQARVAEKAGDSWQVNQWLKKAVLLSFRLNDMVPIEGGPGSSAWWDKVPSKFDNWGEAEFRAAGFRAVPGCFVRRGSYIAPGAVLMPSFINLGAHVGEGTMVDTWVTIGSCAQVGKNCHISGGAGIAGVLEPLQANPVIIEDNCFVGARAEVAEGVIIGEGSVLSMGVYIGASTRIIDRTTGETFYGRVPPYSVVVSGTTPGKPLPDGTPGPGLYCAVIVKRVDAGTRAKTGINELLRT.

Belongs to the transferase hexapeptide repeat family.

Its subcellular location is the cytoplasm. It carries out the reaction (S)-2,3,4,5-tetrahydrodipicolinate + succinyl-CoA + H2O = (S)-2-succinylamino-6-oxoheptanedioate + CoA. It functions in the pathway amino-acid biosynthesis; L-lysine biosynthesis via DAP pathway; LL-2,6-diaminopimelate from (S)-tetrahydrodipicolinate (succinylase route): step 1/3. The chain is 2,3,4,5-tetrahydropyridine-2,6-dicarboxylate N-succinyltransferase from Methylorubrum extorquens (strain PA1) (Methylobacterium extorquens).